The primary structure comprises 1057 residues: Carbamoyl phosphate synthase large chain (1057 aa).

The carboxyphosphate synthetic domain stretch occupies residues 1 to 401 (MPKRNDIKTI…SLLKAIRSLE (401 aa)). The ATP site is built by arginine 129, arginine 169, glycine 175, glycine 176, lysine 208, isoleucine 210, glutamate 215, glycine 241, isoleucine 242, histidine 243, glutamine 284, and glutamate 298. An ATP-grasp 1 domain is found at 133–327 (RNLMNELNEP…IAKLAAKIAV (195 aa)). 3 residues coordinate Mg(2+): glutamine 284, glutamate 298, and asparagine 300. Positions 284, 298, and 300 each coordinate Mn(2+). The segment at 402-546 (YGVHHLGLPN…YGTYETENES (145 aa)) is oligomerization domain. The segment at 547 to 929 (IRSDKKKVVV…ALYKGLVASG (383 aa)) is carbamoyl phosphate synthetic domain. Residues 671–861 (EALMQRIEIP…MANLAMKAIL (191 aa)) form the ATP-grasp 2 domain. ATP is bound by residues arginine 707, arginine 746, leucine 748, glutamate 752, glycine 777, valine 778, histidine 779, serine 780, glutamine 820, and glutamate 832. Glutamine 820, glutamate 832, and asparagine 834 together coordinate Mg(2+). Glutamine 820, glutamate 832, and asparagine 834 together coordinate Mn(2+). In terms of domain architecture, MGS-like spans 930–1057 (LQVKDHGTVL…ESMTFNMNQM (128 aa)). The interval 930–1057 (LQVKDHGTVL…ESMTFNMNQM (128 aa)) is allosteric domain.

It belongs to the CarB family. In terms of assembly, composed of two chains; the small (or glutamine) chain promotes the hydrolysis of glutamine to ammonia, which is used by the large (or ammonia) chain to synthesize carbamoyl phosphate. Tetramer of heterodimers (alpha,beta)4. It depends on Mg(2+) as a cofactor. Mn(2+) serves as cofactor.

It catalyses the reaction hydrogencarbonate + L-glutamine + 2 ATP + H2O = carbamoyl phosphate + L-glutamate + 2 ADP + phosphate + 2 H(+). It carries out the reaction hydrogencarbonate + NH4(+) + 2 ATP = carbamoyl phosphate + 2 ADP + phosphate + 2 H(+). Its pathway is amino-acid biosynthesis; L-arginine biosynthesis; carbamoyl phosphate from bicarbonate: step 1/1. The protein operates within pyrimidine metabolism; UMP biosynthesis via de novo pathway; (S)-dihydroorotate from bicarbonate: step 1/3. Its function is as follows. Large subunit of the glutamine-dependent carbamoyl phosphate synthetase (CPSase). CPSase catalyzes the formation of carbamoyl phosphate from the ammonia moiety of glutamine, carbonate, and phosphate donated by ATP, constituting the first step of 2 biosynthetic pathways, one leading to arginine and/or urea and the other to pyrimidine nucleotides. The large subunit (synthetase) binds the substrates ammonia (free or transferred from glutamine from the small subunit), hydrogencarbonate and ATP and carries out an ATP-coupled ligase reaction, activating hydrogencarbonate by forming carboxy phosphate which reacts with ammonia to form carbamoyl phosphate. The polypeptide is Carbamoyl phosphate synthase large chain (Macrococcus caseolyticus (strain JCSC5402) (Macrococcoides caseolyticum)).